A 380-amino-acid polypeptide reads, in one-letter code: Protein kinase ORF15 (380 aa).

The Protein kinase domain occupies 93–371; the sequence is FIPVKVAGCL…LLIAQLTKFI (279 aa). ATP is bound at residue lysine 118. Aspartate 217 (proton acceptor) is an active-site residue.

Belongs to the protein kinase superfamily. Ser/Thr protein kinase family.

It catalyses the reaction L-seryl-[protein] + ATP = O-phospho-L-seryl-[protein] + ADP + H(+). The enzyme catalyses L-threonyl-[protein] + ATP = O-phospho-L-threonyl-[protein] + ADP + H(+). The polypeptide is Protein kinase ORF15 (ORF15) (Ictalurid herpesvirus 1 (strain Auburn) (IcHV-1)).